We begin with the raw amino-acid sequence, 304 residues long: Aspartate carbamoyltransferase catalytic subunit (304 aa).

Residues Arg-55 and Thr-56 each coordinate carbamoyl phosphate. An L-aspartate-binding site is contributed by Lys-83. Residues Arg-105, His-133, and Gln-136 each contribute to the carbamoyl phosphate site. The L-aspartate site is built by Arg-166 and Arg-220. Carbamoyl phosphate is bound by residues Gly-261 and Pro-262.

Belongs to the aspartate/ornithine carbamoyltransferase superfamily. ATCase family. Heterododecamer (2C3:3R2) of six catalytic PyrB chains organized as two trimers (C3), and six regulatory PyrI chains organized as three dimers (R2).

The catalysed reaction is carbamoyl phosphate + L-aspartate = N-carbamoyl-L-aspartate + phosphate + H(+). Its pathway is pyrimidine metabolism; UMP biosynthesis via de novo pathway; (S)-dihydroorotate from bicarbonate: step 2/3. In terms of biological role, catalyzes the condensation of carbamoyl phosphate and aspartate to form carbamoyl aspartate and inorganic phosphate, the committed step in the de novo pyrimidine nucleotide biosynthesis pathway. The polypeptide is Aspartate carbamoyltransferase catalytic subunit (Caldanaerobacter subterraneus subsp. tengcongensis (strain DSM 15242 / JCM 11007 / NBRC 100824 / MB4) (Thermoanaerobacter tengcongensis)).